The primary structure comprises 581 residues: Leucine aminopeptidase 3, chloroplastic (581 aa).

The N-terminal 50 residues, Met1–Tyr50, are a transit peptide targeting the chloroplast. Mn(2+) contacts are provided by Lys350 and Asp355. Residue Lys362 is part of the active site. Mn(2+) contacts are provided by Asp375, Asp435, and Glu437. Arg439 is a catalytic residue.

It belongs to the peptidase M17 family. As to quaternary structure, homohexamer (dimer of homotrimers). Mn(2+) is required as a cofactor.

It is found in the plastid. The protein resides in the chloroplast. The catalysed reaction is Release of an N-terminal amino acid, Xaa-|-Yaa-, in which Xaa is preferably Leu, but may be other amino acids including Pro although not Arg or Lys, and Yaa may be Pro. Amino acid amides and methyl esters are also readily hydrolyzed, but rates on arylamides are exceedingly low.. The enzyme catalyses Release of N-terminal proline from a peptide.. In terms of biological role, presumably involved in the processing and regular turnover of intracellular proteins. Catalyzes the removal of unsubstituted N-terminal amino acids from various peptides. Possesses Cys-Gly dipeptidase activity. This chain is Leucine aminopeptidase 3, chloroplastic, found in Arabidopsis thaliana (Mouse-ear cress).